The following is a 269-amino-acid chain: Protein SirB1 (269 aa).

Belongs to the UPF0162 family.

Its function is as follows. Required for maximal expression of sirC, not required to invade host cells. In Salmonella typhi, this protein is Protein SirB1 (sirB1).